Reading from the N-terminus, the 125-residue chain is UPF0325 protein Ping_0715 (125 aa).

This sequence belongs to the UPF0325 family.

The sequence is that of UPF0325 protein Ping_0715 from Psychromonas ingrahamii (strain DSM 17664 / CCUG 51855 / 37).